A 173-amino-acid polypeptide reads, in one-letter code: MNYFELFSLSPSFELDTAVLSERYRELQRAVHPDKFANASEQDKRLAVQHTAQVNDGYNTLKHPISRAEHMLSLKGIDLSHESTTVKDTMFLMQQMEWREALEEISDCDDPDEAIEHLHQSFGEYRGDITAQLAQKIGSEEASVLEQAADLVRKLKFMDKLQAELERAEDALF.

Residues 2–74 (NYFELFSLSP…ISRAEHMLSL (73 aa)) enclose the J domain.

The protein belongs to the HscB family. As to quaternary structure, interacts with HscA and stimulates its ATPase activity.

Functionally, co-chaperone involved in the maturation of iron-sulfur cluster-containing proteins. Seems to help targeting proteins to be folded toward HscA. This is Co-chaperone protein HscB homolog from Shewanella loihica (strain ATCC BAA-1088 / PV-4).